Consider the following 280-residue polypeptide: MMVSFTARAKSNVMAYRLLAYSQGDDIIEISHAAENTIPDYVAVKDVDKGDLTQVNMYPLAAWQVIAGSDIKVGDNLTTGKDGTAVPTDDPSTVFGYAVEEAQEGQLVTLVISRSKEISIEVDDIKDAGDTGKRLLKINTPSGARNIIIENEDAKALINGETTNTNKKNLQDLLFSDGNVKAFLQATTTDENKTALQQLLVSNADVLGLLSGNPTSDNKINLRTMIGAGVPYSLPAATTTTLGGVKKGAAVTASTATDVATAVKDLNSLITVLKNAGIIS.

This sequence belongs to the phi29likevirus major capsid fiber protein family. In terms of assembly, homotrimer. Forms a super helix coiled coil in the homotrimer.

The protein localises to the virion. In terms of biological role, protein that forms the 55 capsid fibers. These fibers are not always present and may have been lost in some lab strains. They may enhance the attachment of the virions onto the host cell wall. This Bacillus phage phi29 (Bacteriophage phi-29) protein is Capsid fiber protein.